A 175-amino-acid chain; its full sequence is Hypoxanthine-guanine phosphoribosyltransferase (175 aa).

2 residues coordinate diphosphate: Lys40 and Gly41. Residues Glu96 and Asp97 each coordinate Mg(2+). The active-site Proton acceptor is the Asp100. GMP is bound by residues Lys128, 149–150 (FL), and Asp156. Diphosphate is bound at residue Arg162.

The protein belongs to the purine/pyrimidine phosphoribosyltransferase family. Mg(2+) serves as cofactor.

The protein resides in the cytoplasm. The catalysed reaction is IMP + diphosphate = hypoxanthine + 5-phospho-alpha-D-ribose 1-diphosphate. It carries out the reaction GMP + diphosphate = guanine + 5-phospho-alpha-D-ribose 1-diphosphate. The protein operates within purine metabolism; IMP biosynthesis via salvage pathway; IMP from hypoxanthine: step 1/1. It functions in the pathway purine metabolism; GMP biosynthesis via salvage pathway; GMP from guanine: step 1/1. Functionally, purine salvage pathway enzyme that catalyzes the transfer of the ribosyl-5-phosphate group from 5-phospho-alpha-D-ribose 1-diphosphate (PRPP) to the N9 position of the 6-oxopurines hypoxanthine and guanine to form the corresponding ribonucleotides IMP (inosine 5'-monophosphate) and GMP (guanosine 5'-monophosphate), with the release of PPi. This chain is Hypoxanthine-guanine phosphoribosyltransferase (hpt), found in Mycoplasma genitalium (strain ATCC 33530 / DSM 19775 / NCTC 10195 / G37) (Mycoplasmoides genitalium).